Reading from the N-terminus, the 365-residue chain is MEVKEALFMNRGEGESSYAQNSSFTQKVASMTMPVLENAVETLFSKDFHLFQALNAADLGCATSPNTFTVISTIKRMMEKKCRELNCQTLELQVYLNDLPGNDFNTLFKGLLSKVVVGNKCEEVSCYVMGVPGSFHGRLFPRNSLHLVHSCYSAHWLSQAPKGLTSREGLPLNKGKIYISKRSPPVVREAYLSQFHDDFTMFLNARSQEVVPHGCMVLILPSRQSSDPSSMESCFTWELLAIAIAELVSQGLIDEDKLDTFNVPSYFPSLEEVKDIVERDGSFTIDHMEGFELDTLQMQENDKWIRGEKLAKAVRAFTEPIISNQFGHEIMDKLYDKFTHIVASDLEGKIPKSTSIVLVLSKIVG.

Tyr18 contacts S-adenosyl-L-homocysteine. Thr25 is a binding site for caffeine. S-adenosyl-L-homocysteine-binding residues include Cys61, Asn66, Asp98, Leu99, Ser134, and Phe135. Caffeine contacts are provided by Tyr152, His155, and Trp156. Mg(2+) is bound by residues Asn173, Asp259, Phe261, and Asn262. Residue Phe317 participates in caffeine binding.

It belongs to the methyltransferase superfamily. Type-7 methyltransferase family. Mg(2+) serves as cofactor.

It functions in the pathway alkaloid biosynthesis. In terms of biological role, may be involved in the biosynthesis of caffeine. The sequence is that of Probable caffeine synthase 4 from Camellia sinensis (Tea plant).